The primary structure comprises 441 residues: Ribosomal protein uS12 methylthiotransferase RimO (441 aa).

The 111-residue stretch at 8 to 118 folds into the MTTase N-terminal domain; the sequence is PKIGFVSLGC…VLEHVHHYTP (111 aa). [4Fe-4S] cluster is bound by residues Cys-17, Cys-53, Cys-82, Cys-150, Cys-154, and Cys-157. The Radical SAM core domain occupies 136-373; sequence LTPRHYAYLK…MQLQQQISAE (238 aa). In terms of domain architecture, TRAM spans 376-441; that stretch reads QEKVGREILV…DEYDLWGTRV (66 aa).

This sequence belongs to the methylthiotransferase family. RimO subfamily. It depends on [4Fe-4S] cluster as a cofactor.

The protein resides in the cytoplasm. The catalysed reaction is L-aspartate(89)-[ribosomal protein uS12]-hydrogen + (sulfur carrier)-SH + AH2 + 2 S-adenosyl-L-methionine = 3-methylsulfanyl-L-aspartate(89)-[ribosomal protein uS12]-hydrogen + (sulfur carrier)-H + 5'-deoxyadenosine + L-methionine + A + S-adenosyl-L-homocysteine + 2 H(+). Functionally, catalyzes the methylthiolation of an aspartic acid residue of ribosomal protein uS12. The protein is Ribosomal protein uS12 methylthiotransferase RimO of Klebsiella pneumoniae subsp. pneumoniae (strain ATCC 700721 / MGH 78578).